The primary structure comprises 473 residues: Ribulose bisphosphate carboxylase large chain (473 aa).

2 residues coordinate substrate: Asn116 and Thr166. Lys168 serves as the catalytic Proton acceptor. Lys170 contributes to the substrate binding site. Mg(2+) is bound by residues Lys194, Asp196, and Glu197. Residue Lys194 is modified to N6-carboxylysine. The active-site Proton acceptor is His287. Residues Arg288, His320, and Ser372 each coordinate substrate.

It belongs to the RuBisCO large chain family. Type I subfamily. In terms of assembly, heterohexadecamer of 8 large chains and 8 small chains. Requires Mg(2+) as cofactor.

The catalysed reaction is 2 (2R)-3-phosphoglycerate + 2 H(+) = D-ribulose 1,5-bisphosphate + CO2 + H2O. It carries out the reaction D-ribulose 1,5-bisphosphate + O2 = 2-phosphoglycolate + (2R)-3-phosphoglycerate + 2 H(+). In terms of biological role, ruBisCO catalyzes two reactions: the carboxylation of D-ribulose 1,5-bisphosphate, the primary event in carbon dioxide fixation, as well as the oxidative fragmentation of the pentose substrate. Both reactions occur simultaneously and in competition at the same active site. This Nitrobacter winogradskyi (Nitrobacter agilis) protein is Ribulose bisphosphate carboxylase large chain.